A 491-amino-acid polypeptide reads, in one-letter code: Glutamyl-tRNA(Gln) amidotransferase subunit A (491 aa).

Active-site charge relay system residues include K78 and S158. Catalysis depends on S182, which acts as the Acyl-ester intermediate.

The protein belongs to the amidase family. GatA subfamily. As to quaternary structure, heterotrimer of A, B and C subunits.

It catalyses the reaction L-glutamyl-tRNA(Gln) + L-glutamine + ATP + H2O = L-glutaminyl-tRNA(Gln) + L-glutamate + ADP + phosphate + H(+). Allows the formation of correctly charged Gln-tRNA(Gln) through the transamidation of misacylated Glu-tRNA(Gln) in organisms which lack glutaminyl-tRNA synthetase. The reaction takes place in the presence of glutamine and ATP through an activated gamma-phospho-Glu-tRNA(Gln). The sequence is that of Glutamyl-tRNA(Gln) amidotransferase subunit A from Afipia carboxidovorans (strain ATCC 49405 / DSM 1227 / KCTC 32145 / OM5) (Oligotropha carboxidovorans).